Reading from the N-terminus, the 126-residue chain is Histone H2B type 1-H (126 aa).

Over residues 1-12 (MPDPAKSAPAPK) the composition is skewed to low complexity. The disordered stretch occupies residues 1 to 36 (MPDPAKSAPAPKKGSKKAVTKAQKKDGKKRKRSRKE). An N-acetylproline modification is found at P2. N6-(2-hydroxyisobutyryl)lysine; alternate is present on K6. K6 carries the N6-(beta-hydroxybutyryl)lysine; alternate modification. An N6-acetyllysine; alternate modification is found at K6. K6 is subject to N6-butyryllysine; alternate. K6 is modified (N6-crotonyllysine; alternate). K6 is modified (N6-lactoyllysine; alternate). K6 participates in a covalent cross-link: Glycyl lysine isopeptide (Lys-Gly) (interchain with G-Cter in SUMO2); alternate. S7 is subject to ADP-ribosylserine. N6-(beta-hydroxybutyryl)lysine; alternate is present on K12. N6-acetyllysine; alternate is present on residues K12 and K13. 2 positions are modified to N6-crotonyllysine; alternate: K12 and K13. K12 bears the N6-lactoyllysine; alternate mark. At K13 the chain carries N6-(2-hydroxyisobutyryl)lysine; alternate. Phosphoserine; by STK4/MST1 is present on S15. 4 positions are modified to N6-acetyllysine; alternate: K16, K17, K21, and K24. 4 positions are modified to N6-crotonyllysine; alternate: K16, K17, K21, and K24. An N6-lactoyllysine; alternate mark is found at K16, K17, K21, and K24. N6-(beta-hydroxybutyryl)lysine; alternate is present on residues K17 and K21. At K17 the chain carries N6-glutaryllysine; alternate. 2 positions are modified to N6-(2-hydroxyisobutyryl)lysine; alternate: K21 and K24. K21 bears the N6-butyryllysine; alternate mark. K21 participates in a covalent cross-link: Glycyl lysine isopeptide (Lys-Gly) (interchain with G-Cter in SUMO2); alternate. N6-(2-hydroxyisobutyryl)lysine is present on K25. K35 is subject to N6-(2-hydroxyisobutyryl)lysine; alternate. At K35 the chain carries N6-(beta-hydroxybutyryl)lysine; alternate. N6-crotonyllysine; alternate is present on K35. K35 carries the post-translational modification N6-glutaryllysine; alternate. Position 35 is an N6-succinyllysine; alternate (K35). K35 is covalently cross-linked (Glycyl lysine isopeptide (Lys-Gly) (interchain with G-Cter in ubiquitin); alternate). E36 is subject to PolyADP-ribosyl glutamic acid. Position 37 is a phosphoserine; by AMPK (S37). N6-(2-hydroxyisobutyryl)lysine; alternate is present on residues K44, K47, and K58. K44 is modified (N6-lactoyllysine; alternate). K44 and K47 each carry N6-glutaryllysine; alternate. K47 bears the N6-methyllysine; alternate mark. N6,N6-dimethyllysine; alternate is present on K58. Position 80 is a dimethylated arginine (R80). N6-(2-hydroxyisobutyryl)lysine; alternate is present on K86. K86 carries the N6-(beta-hydroxybutyryl)lysine; alternate modification. K86 bears the N6-acetyllysine; alternate mark. An N6-lactoyllysine; alternate modification is found at K86. K86 bears the N6,N6,N6-trimethyllysine; alternate mark. An omega-N-methylarginine mark is found at R87 and R93. An N6-(2-hydroxyisobutyryl)lysine; alternate modification is found at K109. Residue K109 is modified to N6-lactoyllysine; alternate. N6-glutaryllysine; alternate is present on K109. At K109 the chain carries N6-methyllysine; alternate. Residue S113 is glycosylated (O-linked (GlcNAc) serine). Phosphothreonine is present on T116. N6-(2-hydroxyisobutyryl)lysine; alternate occurs at positions 117 and 121. K117 and K121 each carry N6-(beta-hydroxybutyryl)lysine; alternate. 2 positions are modified to N6-lactoyllysine; alternate: K117 and K121. An N6-glutaryllysine; alternate mark is found at K117 and K121. Residues K117 and K121 each carry the N6-succinyllysine; alternate modification. K117 is modified (N6-malonyllysine; alternate). The residue at position 117 (K117) is an N6-methylated lysine; alternate. Residue K121 forms a Glycyl lysine isopeptide (Lys-Gly) (interchain with G-Cter in ubiquitin); alternate linkage.

The protein belongs to the histone H2B family. The nucleosome is a histone octamer containing two molecules each of H2A, H2B, H3 and H4 assembled in one H3-H4 heterotetramer and two H2A-H2B heterodimers. The octamer wraps approximately 147 bp of DNA. Found in a complex with PPAR9; DTX3L AND STAT1; the interaction is likely to induce DTX3L-mediated ubiquitination of H2BC9/H2BJ. In terms of processing, monoubiquitination at Lys-35 (H2BK34Ub) by the MSL1/MSL2 dimer is required for histone H3 'Lys-4' (H3K4me) and 'Lys-79' (H3K79me) methylation and transcription activation at specific gene loci, such as HOXA9 and MEIS1 loci. Similarly, monoubiquitination at Lys-121 (H2BK120Ub) by the RNF20/40 complex gives a specific tag for epigenetic transcriptional activation and is also prerequisite for histone H3 'Lys-4' and 'Lys-79' methylation. It also functions cooperatively with the FACT dimer to stimulate elongation by RNA polymerase II. H2BK120Ub also acts as a regulator of mRNA splicing: deubiquitination by USP49 is required for efficient cotranscriptional splicing of a large set of exons. Monoubiquitinated by DTX3L upon encephalomyocarditis virus (EMCV)-mediated infection. Phosphorylation at Ser-37 (H2BS36ph) by AMPK in response to stress promotes transcription. Phosphorylated on Ser-15 (H2BS14ph) by STK4/MST1 during apoptosis; which facilitates apoptotic chromatin condensation. Also phosphorylated on Ser-15 in response to DNA double strand breaks (DSBs), and in correlation with somatic hypermutation and immunoglobulin class-switch recombination. Post-translationally, glcNAcylation at Ser-113 promotes monoubiquitination of Lys-121. It fluctuates in response to extracellular glucose, and associates with transcribed genes. In terms of processing, ADP-ribosylated by PARP1 or PARP2 on Ser-7 (H2BS6ADPr) in response to DNA damage. H2BS6ADPr promotes recruitment of CHD1L. Poly ADP-ribosylation on Glu-36 (H2BE35ADPr) by PARP1 regulates adipogenesis: it inhibits phosphorylation at Ser-37 (H2BS36ph), thereby blocking expression of pro-adipogenetic genes. Crotonylation (Kcr) is specifically present in male germ cells and marks testis-specific genes in post-meiotic cells, including X-linked genes that escape sex chromosome inactivation in haploid cells. Crotonylation marks active promoters and enhancers and confers resistance to transcriptional repressors. It is also associated with post-meiotically activated genes on autosomes. Post-translationally, lactylated in macrophages by EP300/P300 by using lactoyl-CoA directly derived from endogenous or exogenous lactate, leading to stimulates gene transcription.

Its subcellular location is the nucleus. It localises to the chromosome. Core component of nucleosome. Nucleosomes wrap and compact DNA into chromatin, limiting DNA accessibility to the cellular machineries which require DNA as a template. Histones thereby play a central role in transcription regulation, DNA repair, DNA replication and chromosomal stability. DNA accessibility is regulated via a complex set of post-translational modifications of histones, also called histone code, and nucleosome remodeling. The sequence is that of Histone H2B type 1-H from Homo sapiens (Human).